Reading from the N-terminus, the 150-residue chain is UPF0506 protein SJCHGC02381 (150 aa).

The signal sequence occupies residues 1–18 (MNTCIQLLILCLVTVINS). Residues Asn-20, Asn-24, Asn-32, Asn-36, Asn-48, Asn-52, Asn-64, and Asn-110 are each glycosylated (N-linked (GlcNAc...) asparagine). The disordered stretch occupies residues 22–49 (TDNSTENTIKNETENATETELPETFENE). Residues 36 to 49 (NATETELPETFENE) are compositionally biased toward acidic residues. Intrachain disulfides connect Cys-116/Cys-130, Cys-123/Cys-134, and Cys-129/Cys-139.

It belongs to the UPF0506 family.

It is found in the secreted. In Schistosoma japonicum (Blood fluke), this protein is UPF0506 protein SJCHGC02381.